Here is a 524-residue protein sequence, read N- to C-terminus: Cytochrome P450 monooxygenase drtD (524 aa).

The helical transmembrane segment at Ser2–Leu22 threads the bilayer. Cys418 contacts heme.

Belongs to the cytochrome P450 family. Heme is required as a cofactor.

Its subcellular location is the membrane. It participates in secondary metabolite biosynthesis; terpenoid biosynthesis. In terms of biological role, cytochrome P450 monooxygenase; part of the gene cluster that mediates the biosynthesis of various drimane-type sesquiterpene esters, compounds that exhibit diverse biological activities and are widely present in eukaryotes. The pathway begins with the synthesis of the backbone drimenol by the terpene cyclase drtB using farnesyl pyrophosphate (FPP) as substrate. The cytochrome P450 monooxygenase drtD is then responsible for the hydroxylations at C-6, C-9 and C-12, as well as the oxidation of hydroxyl groups at C-6 and C-11 to a ketone and an aldehyde, respectively. Then, the biosynthesis can go in two directions, either the hydroxylated drimenol is further hydroxylated at C-2 and C-3 by an enzyme(s) not associated with the drt cluster, or the FAD-binding oxidoreductase drtC further oxidizes C-11 or C-12 to form the butyrolactone ring. DrtB, drtD and drtC are solely responsible for the formation of the different drimane structures observed during drimane sesquiterpenes biosynthesis. The polyketide synthase drtA synthesizes different lengths (C6 and C8) of PKS chains, which are then oxidized to varying degrees by the short-chain dehydrogenase drtF. Finally, these PKS chains are transferred onto drimane sesquiterpenes by the acyltransferase drtE, forming the sesquiterpene esters. In addition to the different fatty acyl-CoA chains produced by drtA, drtE is also able to use cinnamoyl-CoA as a substrate. The polypeptide is Cytochrome P450 monooxygenase drtD (Aspergillus calidoustus).